A 215-amino-acid chain; its full sequence is NAD(P)H-hydrate epimerase (215 aa).

Positions Met-8–Glu-212 constitute a YjeF N-terminal domain. Asn-57 to Asp-61 is a (6S)-NADPHX binding site. Asn-58 and Asp-124 together coordinate K(+). Residues Gly-128–Glu-134, Tyr-139, and Asp-157 contribute to the (6S)-NADPHX site. Ser-160 lines the K(+) pocket.

This sequence belongs to the NnrE/AIBP family. K(+) serves as cofactor.

It carries out the reaction (6R)-NADHX = (6S)-NADHX. The catalysed reaction is (6R)-NADPHX = (6S)-NADPHX. Its function is as follows. Catalyzes the epimerization of the S- and R-forms of NAD(P)HX, a damaged form of NAD(P)H that is a result of enzymatic or heat-dependent hydration. This is a prerequisite for the S-specific NAD(P)H-hydrate dehydratase to allow the repair of both epimers of NAD(P)HX. This chain is NAD(P)H-hydrate epimerase, found in Nitrosopumilus maritimus (strain SCM1).